Reading from the N-terminus, the 430-residue chain is Corticosteroid-binding globulin (430 aa).

Residues 1–22 (MLLTLYTCLLWLSTSGLWTIQA) form the signal peptide. Asn-119, Asn-175, and Asn-243 each carry an N-linked (GlcNAc...) asparagine glycan. Gln-253 contacts cortisol. Asn-259 is a glycosylation site (N-linked (GlcNAc...) asparagine). Gln-285 serves as a coordination point for cortisol. Residue Asn-326 is glycosylated (N-linked (GlcNAc...) asparagine). A cortisol-binding site is contributed by Trp-392.

Belongs to the serpin family. As to expression, expressed by the liver; secreted in plasma.

The protein resides in the secreted. Major transport protein for glucocorticoids and progestins in the blood of almost all vertebrate species. The chain is Corticosteroid-binding globulin (SERPINA6) from Ovis aries (Sheep).